Here is a 229-residue protein sequence, read N- to C-terminus: Large ribosomal subunit protein uL1c (229 aa).

The protein belongs to the universal ribosomal protein uL1 family. Part of the 50S ribosomal subunit.

It localises to the plastid. The protein resides in the chloroplast. Binds directly to 23S rRNA. Might be involved in E site tRNA release (Potential). This is Large ribosomal subunit protein uL1c (rpl1) from Pyropia yezoensis (Susabi-nori).